The chain runs to 54 residues: ATP synthase protein 8 (54 aa).

A helical transmembrane segment spans residues 13 to 32 (ITFTFVIITLMVYILSKYIL).

This sequence belongs to the ATPase protein 8 family. In terms of assembly, F-type ATPases have 2 components, CF(1) - the catalytic core - and CF(0) - the membrane proton channel.

It localises to the mitochondrion membrane. Functionally, mitochondrial membrane ATP synthase (F(1)F(0) ATP synthase or Complex V) produces ATP from ADP in the presence of a proton gradient across the membrane which is generated by electron transport complexes of the respiratory chain. F-type ATPases consist of two structural domains, F(1) - containing the extramembraneous catalytic core and F(0) - containing the membrane proton channel, linked together by a central stalk and a peripheral stalk. During catalysis, ATP synthesis in the catalytic domain of F(1) is coupled via a rotary mechanism of the central stalk subunits to proton translocation. Part of the complex F(0) domain. Minor subunit located with subunit a in the membrane. This is ATP synthase protein 8 (atp-8) from Neurospora crassa (strain ATCC 24698 / 74-OR23-1A / CBS 708.71 / DSM 1257 / FGSC 987).